We begin with the raw amino-acid sequence, 336 residues long: Probable allantoicase (336 aa).

Belongs to the allantoicase family.

The catalysed reaction is allantoate + H2O = (S)-ureidoglycolate + urea. It participates in nitrogen metabolism; (S)-allantoin degradation; (S)-ureidoglycolate from allantoate (aminidohydrolase route): step 1/1. This Acinetobacter baumannii (strain AYE) protein is Probable allantoicase.